Reading from the N-terminus, the 380-residue chain is Cytochrome b (380 aa).

Transmembrane regions (helical) follow at residues 34 to 54 (FGSLLGICLVTQIITGLLLAA), 78 to 99 (WLIRNLHANGASLFFICIYLHI), 114 to 134 (WNIGVILLLTLMATAFVGYVL), and 179 to 199 (FFALHFLLPFVIAGLTLVHLT). 2 residues coordinate heme b: His84 and His98. His183 and His197 together coordinate heme b. His202 lines the a ubiquinone pocket. 4 consecutive transmembrane segments (helical) span residues 227–247 (IKDILGFALMLISLATLALFS), 289–309 (LGGVLALAASVLILFLIPLLH), 321–341 (LSQILFWILVTDLLILTWVGS), and 348–368 (FIIIGQLASFSYFMIILVLFP).

It belongs to the cytochrome b family. The cytochrome bc1 complex contains 11 subunits: 3 respiratory subunits (MT-CYB, CYC1 and UQCRFS1), 2 core proteins (UQCRC1 and UQCRC2) and 6 low-molecular weight proteins (UQCRH/QCR6, UQCRB/QCR7, UQCRQ/QCR8, UQCR10/QCR9, UQCR11/QCR10 and a cleavage product of UQCRFS1). This cytochrome bc1 complex then forms a dimer. Heme b serves as cofactor.

The protein resides in the mitochondrion inner membrane. In terms of biological role, component of the ubiquinol-cytochrome c reductase complex (complex III or cytochrome b-c1 complex) that is part of the mitochondrial respiratory chain. The b-c1 complex mediates electron transfer from ubiquinol to cytochrome c. Contributes to the generation of a proton gradient across the mitochondrial membrane that is then used for ATP synthesis. The protein is Cytochrome b (MT-CYB) of Paradisaea rubra (Red bird of paradise).